The chain runs to 482 residues: tRNA sulfurtransferase (482 aa).

The THUMP domain maps to 61 to 165; it reads LAIRDALTRI…DDRLLLIKGR (105 aa). ATP-binding positions include 183–184, Lys-265, Gly-287, and Gln-296; that span reads LI. A disulfide bridge links Cys-344 with Cys-456. The 79-residue stretch at 404 to 482 folds into the Rhodanese domain; sequence FGPNDVILDI…GFENVKVYRP (79 aa). Cys-456 functions as the Cysteine persulfide intermediate in the catalytic mechanism.

This sequence belongs to the ThiI family.

It is found in the cytoplasm. The catalysed reaction is [ThiI sulfur-carrier protein]-S-sulfanyl-L-cysteine + a uridine in tRNA + 2 reduced [2Fe-2S]-[ferredoxin] + ATP + H(+) = [ThiI sulfur-carrier protein]-L-cysteine + a 4-thiouridine in tRNA + 2 oxidized [2Fe-2S]-[ferredoxin] + AMP + diphosphate. It carries out the reaction [ThiS sulfur-carrier protein]-C-terminal Gly-Gly-AMP + S-sulfanyl-L-cysteinyl-[cysteine desulfurase] + AH2 = [ThiS sulfur-carrier protein]-C-terminal-Gly-aminoethanethioate + L-cysteinyl-[cysteine desulfurase] + A + AMP + 2 H(+). Its pathway is cofactor biosynthesis; thiamine diphosphate biosynthesis. Its function is as follows. Catalyzes the ATP-dependent transfer of a sulfur to tRNA to produce 4-thiouridine in position 8 of tRNAs, which functions as a near-UV photosensor. Also catalyzes the transfer of sulfur to the sulfur carrier protein ThiS, forming ThiS-thiocarboxylate. This is a step in the synthesis of thiazole, in the thiamine biosynthesis pathway. The sulfur is donated as persulfide by IscS. This chain is tRNA sulfurtransferase, found in Salmonella enteritidis PT4 (strain P125109).